The chain runs to 189 residues: TATA-box-binding protein 1 (189 aa).

Tandem repeats lie at residues isoleucine 10–leucine 86 and valine 101–leucine 179.

It belongs to the TBP family.

In terms of biological role, general factor that plays a role in the activation of archaeal genes transcribed by RNA polymerase. Binds specifically to the TATA box promoter element which lies close to the position of transcription initiation. The polypeptide is TATA-box-binding protein 1 (tbp1) (Haloferax volcanii (strain ATCC 29605 / DSM 3757 / JCM 8879 / NBRC 14742 / NCIMB 2012 / VKM B-1768 / DS2) (Halobacterium volcanii)).